The chain runs to 968 residues: Alanine--tRNA ligase, cytoplasmic (968 aa).

M1 carries the N-acetylmethionine modification. ATP contacts are provided by residues R77, H95, W176, and 214–216 (IWN). L-alanine contacts are provided by N216 and D239. G243 contributes to the ATP binding site. 2 positions are modified to phosphoserine: S399 and S555. Zn(2+) is bound by residues H605, H609, C723, and H727. The Nuclear localization signal signature appears at 750–763 (RRIVAVTGAEAQKA). N6-acetyllysine is present on K876. K943 carries the post-translational modification N6,N6,N6-trimethyllysine; alternate. At K943 the chain carries N6,N6-dimethyllysine; alternate. Residue K943 is modified to N6-methyllysine; alternate.

The protein belongs to the class-II aminoacyl-tRNA synthetase family. As to quaternary structure, monomer. Interacts with ANKRD16; the interaction is direct. Requires Zn(2+) as cofactor. Post-translationally, ISGylated. Methylation at 'Lys-943' by METTL21C.

The protein resides in the cytoplasm. The protein localises to the nucleus. It catalyses the reaction tRNA(Ala) + L-alanine + ATP = L-alanyl-tRNA(Ala) + AMP + diphosphate. It carries out the reaction (S)-lactate + ATP + H(+) = (S)-lactoyl-AMP + diphosphate. The catalysed reaction is (S)-lactoyl-AMP + L-lysyl-[protein] = N(6)-[(S)-lactoyl]-L-lysyl-[protein] + AMP + 2 H(+). Its activity is regulated as follows. The protein lactyltransferase activity is inhibited by beta-alanine. Catalyzes the attachment of alanine to tRNA(Ala) in a two-step reaction: alanine is first activated by ATP to form Ala-AMP and then transferred to the acceptor end of tRNA(Ala). Also edits incorrectly charged tRNA(Ala) via its editing domain. In presence of high levels of lactate, also acts as a protein lactyltransferase that mediates lactylation of lysine residues in target proteins, such as TEAD1, TP53/p53 and YAP1. Protein lactylation takes place in a two-step reaction: lactate is first activated by ATP to form lactate-AMP and then transferred to lysine residues of target proteins. Acts as an inhibitor of TP53/p53 activity by catalyzing lactylation of TP53/p53. Acts as a positive regulator of the Hippo pathway by mediating lactylation of TEAD1 and YAP1. The chain is Alanine--tRNA ligase, cytoplasmic from Mus musculus (Mouse).